A 323-amino-acid chain; its full sequence is NADH-cytochrome b5 reductase 2 (323 aa).

A helical membrane pass occupies residues 30 to 46; the sequence is LAPIYTAVGLTGLSVGL. The 106-residue stretch at 72-177 folds into the FAD-binding FR-type domain; that stretch reads QGWVDLKLSE…KGPLPKYQWE (106 aa). 180 to 215 lines the FAD pocket; that stretch reads KHEHIALIAGGTGITPMYQLIRQIFKNPDDKTKVTL.

The protein belongs to the flavoprotein pyridine nucleotide cytochrome reductase family. It depends on FAD as a cofactor.

It localises to the mitochondrion outer membrane. It catalyses the reaction 2 Fe(III)-[cytochrome b5] + NADH = 2 Fe(II)-[cytochrome b5] + NAD(+) + H(+). Its function is as follows. May mediate the reduction of outer membrane cytochrome b5. This Aspergillus oryzae (strain ATCC 42149 / RIB 40) (Yellow koji mold) protein is NADH-cytochrome b5 reductase 2 (mcr1).